The primary structure comprises 44 residues: Large ribosomal subunit protein P2 (44 aa).

N-acetylmethionine is present on Met1. Ser17 and Ser19 each carry phosphoserine. At Lys21 the chain carries N6-acetyllysine; alternate. The residue at position 21 (Lys21) is an N6-succinyllysine; alternate.

It belongs to the eukaryotic ribosomal protein P1/P2 family. In terms of assembly, heterodimer with RPLP1 at the lateral ribosomal stalk of the large ribosomal subunit. In terms of processing, phosphorylated.

Its function is as follows. Plays an important role in the elongation step of protein synthesis. This Oryctolagus cuniculus (Rabbit) protein is Large ribosomal subunit protein P2 (RPLP2).